The chain runs to 347 residues: Quinolinate synthase (347 aa).

Residues H47 and S68 each coordinate iminosuccinate. C113 is a [4Fe-4S] cluster binding site. Iminosuccinate is bound by residues 139 to 141 (YAN) and S156. C200 contributes to the [4Fe-4S] cluster binding site. Iminosuccinate is bound by residues 226–228 (HPE) and T243. C297 contributes to the [4Fe-4S] cluster binding site.

This sequence belongs to the quinolinate synthase family. Type 1 subfamily. [4Fe-4S] cluster is required as a cofactor.

Its subcellular location is the cytoplasm. It carries out the reaction iminosuccinate + dihydroxyacetone phosphate = quinolinate + phosphate + 2 H2O + H(+). The protein operates within cofactor biosynthesis; NAD(+) biosynthesis; quinolinate from iminoaspartate: step 1/1. In terms of biological role, catalyzes the condensation of iminoaspartate with dihydroxyacetone phosphate to form quinolinate. In Salmonella paratyphi A (strain ATCC 9150 / SARB42), this protein is Quinolinate synthase.